The primary structure comprises 352 residues: Glycerol-3-phosphate dehydrogenase [NAD(P)+] (352 aa).

NADPH contacts are provided by S11, W12, R32, and K105. 3 residues coordinate sn-glycerol 3-phosphate: K105, G133, and S135. Residue A137 participates in NADPH binding. Sn-glycerol 3-phosphate is bound by residues K188, D241, S251, R252, and N253. K188 acts as the Proton acceptor in catalysis. R252 contributes to the NADPH binding site. 2 residues coordinate NADPH: V276 and E278.

The protein belongs to the NAD-dependent glycerol-3-phosphate dehydrogenase family.

The protein resides in the cytoplasm. The catalysed reaction is sn-glycerol 3-phosphate + NAD(+) = dihydroxyacetone phosphate + NADH + H(+). The enzyme catalyses sn-glycerol 3-phosphate + NADP(+) = dihydroxyacetone phosphate + NADPH + H(+). It functions in the pathway membrane lipid metabolism; glycerophospholipid metabolism. Its function is as follows. Catalyzes the reduction of the glycolytic intermediate dihydroxyacetone phosphate (DHAP) to sn-glycerol 3-phosphate (G3P), the key precursor for phospholipid synthesis. The polypeptide is Glycerol-3-phosphate dehydrogenase [NAD(P)+] (Desulfitobacterium hafniense (strain Y51)).